We begin with the raw amino-acid sequence, 301 residues long: 2-dehydropantoate 2-reductase (301 aa).

NADP(+)-binding positions include 11–16 (GAGAMG), Asn107, and Ala133. Residue Asn107 coordinates substrate. The Proton donor role is filled by Lys187. Asn191, Asn195, Asn205, and Ser251 together coordinate substrate. Residue Glu263 participates in NADP(+) binding.

This sequence belongs to the ketopantoate reductase family.

The protein localises to the cytoplasm. The catalysed reaction is (R)-pantoate + NADP(+) = 2-dehydropantoate + NADPH + H(+). It participates in cofactor biosynthesis; (R)-pantothenate biosynthesis; (R)-pantoate from 3-methyl-2-oxobutanoate: step 2/2. Catalyzes the NADPH-dependent reduction of ketopantoate into pantoic acid. This Listeria innocua serovar 6a (strain ATCC BAA-680 / CLIP 11262) protein is 2-dehydropantoate 2-reductase.